Reading from the N-terminus, the 314-residue chain is Caspase-like protein (314 aa).

It belongs to the peptidase C14A family.

Functionally, may be involved in viral replication. The sequence is that of Caspase-like protein from Heliothis virescens ascovirus 3e (HvAV-3e).